Consider the following 274-residue polypeptide: Glutamate racemase (274 aa).

Substrate contacts are provided by residues 9 to 10 and 41 to 42; these read DS and YG. Residue Cys73 is the Proton donor/acceptor of the active site. 74–75 contributes to the substrate binding site; that stretch reads NT. Cys183 functions as the Proton donor/acceptor in the catalytic mechanism. 184–185 lines the substrate pocket; sequence TH.

It belongs to the aspartate/glutamate racemases family.

The enzyme catalyses L-glutamate = D-glutamate. It participates in cell wall biogenesis; peptidoglycan biosynthesis. Its function is as follows. Provides the (R)-glutamate required for cell wall biosynthesis. The chain is Glutamate racemase from Shewanella baltica (strain OS155 / ATCC BAA-1091).